The following is a 556-amino-acid chain: Arginine--tRNA ligase (556 aa).

The short motif at 132–142 (ANPTGSLHLGH) is the 'HIGH' region element.

It belongs to the class-I aminoacyl-tRNA synthetase family. As to quaternary structure, monomer.

It localises to the cytoplasm. It carries out the reaction tRNA(Arg) + L-arginine + ATP = L-arginyl-tRNA(Arg) + AMP + diphosphate. The chain is Arginine--tRNA ligase from Anoxybacillus flavithermus (strain DSM 21510 / WK1).